The sequence spans 65 residues: Putative per-hexamer repeat protein 2 (65 aa).

In Mus musculus (Mouse), this protein is Putative per-hexamer repeat protein 2 (Phxr2).